The chain runs to 100 residues: Integration host factor subunit alpha (100 aa).

Belongs to the bacterial histone-like protein family. In terms of assembly, heterodimer of an alpha and a beta chain.

Its function is as follows. This protein is one of the two subunits of integration host factor, a specific DNA-binding protein that functions in genetic recombination as well as in transcriptional and translational control. The sequence is that of Integration host factor subunit alpha (ihfA) from Zymomonas mobilis subsp. mobilis (strain ATCC 31821 / ZM4 / CP4).